Reading from the N-terminus, the 293-residue chain is Aquaporin-6 (293 aa).

At 1 to 22 (MEPGLCSRAYLLVGGLWTAISK) the chain is on the cytoplasmic side. Residues 23 to 43 (ALFAEFLATGLYVFFGVGSVL) traverse the membrane as a helical segment. At 44–51 (PWPVALPS) the chain is on the extracellular side. Residues 52–70 (VLQIAITFNLATATAVQIS) form a helical membrane-spanning segment. Residues 71–75 (WKTSG) are Cytoplasmic-facing. Residues 76-85 (AHANPAVTLA) constitute an intramembrane region (discontinuously helical). The short motif at 79-81 (NPA) is the NPA 1 element. Residues 86-96 (YLVGSHISLPR) are Cytoplasmic-facing. A helical transmembrane segment spans residues 97–118 (AMAYIAAQLAGATAGAALLYGV). At 119-138 (TPGGIRETLGVNVVHNSTST) the chain is on the extracellular side. Asn134 is a glycosylation site (N-linked (GlcNAc...) asparagine). A helical transmembrane segment spans residues 139–159 (GQAVAVELVLTLQLVLCVFAS). The Cytoplasmic segment spans residues 160-165 (MDGRQT). The helical transmembrane segment at 166-185 (LASPAAMIGTSVALGHLIGI) threads the bilayer. The Extracellular segment spans residues 186 to 189 (YFTG). Positions 190–202 (CSMNPARSFGPAV) form an intramembrane region, discontinuously helical. Residues 193–195 (NPA) carry the NPA 2 motif. The Extracellular portion of the chain corresponds to 203 to 210 (IVGKFAVH). A helical transmembrane segment spans residues 211–231 (WIFWVGPLTGAVLASLIYNFI). The Cytoplasmic segment spans residues 232–293 (LFPDTKTVAQ…RSFSFTLGLC (62 aa)).

This sequence belongs to the MIP/aquaporin (TC 1.A.8) family. In terms of assembly, homotetramer; each monomer provides an independent solute pore.

It is found in the cytoplasmic vesicle membrane. It catalyses the reaction nitrate(in) = nitrate(out). The enzyme catalyses iodide(out) = iodide(in). The catalysed reaction is bromide(in) = bromide(out). It carries out the reaction chloride(in) = chloride(out). It catalyses the reaction Na(+)(in) = Na(+)(out). The enzyme catalyses H2O(in) = H2O(out). The catalysed reaction is CO2(out) = CO2(in). It carries out the reaction NH4(+)(in) = NH4(+)(out). In terms of biological role, aquaporins form homotetrameric transmembrane channels, with each monomer independently mediating water transport across the plasma membrane along its osmotic gradient. Unlike classical aquaporins, AQP6 is an intracellular channel with selective anion permeability, particularly for nitrate, and exhibits very low water permeability. It may also facilitate the transport of gases, such as CO2 and NH4(+), as demonstrated in vitro. This is Aquaporin-6 from Mus musculus (Mouse).